The chain runs to 312 residues: MERDKPVSVSEFLLLGLSRQPQQQHLLFVFFLSMYLATVLGNLLIILAISIDSRLHTPMYFFLSNMSFVDNCFSTTVPKMLANHILRTQTISFSGCLMQMYFISELADMDNFLLAVMAYDRFVAVCRPLHYTAKMIHQLCALLVTGSWVVANSNALLHTLLMARLSFCADNTIPHIFCDVTPLLKLSCSDTHLSEVMILTEAALVTITPFLCLLASYMHITCVVLRVPSTKGRWKAFSTCGSHLAVVLLFYGTIMSPYFRTSSSHSAQRDIAAAVRFTVVTPVMNPLIYSLRNKDIKGALVKVVAVKFFSVQ.

Residues 1-25 are Extracellular-facing; the sequence is MERDKPVSVSEFLLLGLSRQPQQQH. The helical transmembrane segment at 26–49 threads the bilayer; the sequence is LLFVFFLSMYLATVLGNLLIILAI. Over 50 to 57 the chain is Cytoplasmic; the sequence is SIDSRLHT. Residues 58 to 78 traverse the membrane as a helical segment; sequence PMYFFLSNMSFVDNCFSTTVP. At 79–99 the chain is on the extracellular side; that stretch reads KMLANHILRTQTISFSGCLMQ. A disulfide bond links Cys96 and Cys188. A helical transmembrane segment spans residues 100 to 119; that stretch reads MYFISELADMDNFLLAVMAY. Residues 120–138 lie on the Cytoplasmic side of the membrane; sequence DRFVAVCRPLHYTAKMIHQ. Residues 139–157 traverse the membrane as a helical segment; sequence LCALLVTGSWVVANSNALL. Over 158–195 the chain is Extracellular; it reads HTLLMARLSFCADNTIPHIFCDVTPLLKLSCSDTHLSE. Residues 196–218 form a helical membrane-spanning segment; sequence VMILTEAALVTITPFLCLLASYM. Residues 219–235 lie on the Cytoplasmic side of the membrane; it reads HITCVVLRVPSTKGRWK. A helical transmembrane segment spans residues 236–258; that stretch reads AFSTCGSHLAVVLLFYGTIMSPY. Over 259–271 the chain is Extracellular; it reads FRTSSSHSAQRDI. Residues 272 to 291 form a helical membrane-spanning segment; sequence AAAVRFTVVTPVMNPLIYSL. Over 292–312 the chain is Cytoplasmic; the sequence is RNKDIKGALVKVVAVKFFSVQ.

This sequence belongs to the G-protein coupled receptor 1 family.

It localises to the cell membrane. Odorant receptor. This Homo sapiens (Human) protein is Putative olfactory receptor 1F2 (OR1F2P).